The sequence spans 178 residues: Large ribosomal subunit protein uL5 (178 aa).

It belongs to the universal ribosomal protein uL5 family. As to quaternary structure, part of the 50S ribosomal subunit; part of the 5S rRNA/L5/L18/L25 subcomplex. Contacts the 5S rRNA and the P site tRNA. Forms a bridge to the 30S subunit in the 70S ribosome.

This is one of the proteins that bind and probably mediate the attachment of the 5S RNA into the large ribosomal subunit, where it forms part of the central protuberance. In the 70S ribosome it contacts protein S13 of the 30S subunit (bridge B1b), connecting the 2 subunits; this bridge is implicated in subunit movement. Contacts the P site tRNA; the 5S rRNA and some of its associated proteins might help stabilize positioning of ribosome-bound tRNAs. This Wolbachia pipientis subsp. Culex pipiens (strain wPip) protein is Large ribosomal subunit protein uL5.